A 29-amino-acid polypeptide reads, in one-letter code: Trypsin inhibitor 1 (29 aa).

3 cysteine pairs are disulfide-bonded: Cys3-Cys20, Cys10-Cys22, and Cys16-Cys28.

It belongs to the protease inhibitor I7 (squash-type serine protease inhibitor) family.

It is found in the secreted. Functionally, inhibits trypsin. The chain is Trypsin inhibitor 1 from Luffa aegyptiaca (Sponge gourd).